The primary structure comprises 145 residues: 3-dehydroquinate dehydratase (145 aa).

Tyr22 serves as the catalytic Proton acceptor. The substrate site is built by Asn71, His77, and Asp84. His97 serves as the catalytic Proton donor. Substrate is bound by residues 98–99 (LS) and Arg108.

Belongs to the type-II 3-dehydroquinase family. As to quaternary structure, homododecamer.

It carries out the reaction 3-dehydroquinate = 3-dehydroshikimate + H2O. It participates in metabolic intermediate biosynthesis; chorismate biosynthesis; chorismate from D-erythrose 4-phosphate and phosphoenolpyruvate: step 3/7. Its function is as follows. Catalyzes a trans-dehydration via an enolate intermediate. This chain is 3-dehydroquinate dehydratase, found in Francisella tularensis subsp. mediasiatica (strain FSC147).